A 232-amino-acid chain; its full sequence is Ferric nitrobindin-like protein (232 aa).

A compositionally biased stretch (polar residues) spans 1 to 10; it reads MSENETSKTG. The tract at residues 1–33 is disordered; it reads MSENETSKTGGNAGVPGSGADAPSLSDSPAISG. The GXWXGXG signature appears at 85–91; that stretch reads GVWRGEG.

This sequence belongs to the nitrobindin family.

The protein is Ferric nitrobindin-like protein of Corynebacterium efficiens (strain DSM 44549 / YS-314 / AJ 12310 / JCM 11189 / NBRC 100395).